The primary structure comprises 297 residues: tRNA dimethylallyltransferase (297 aa).

Residue 15–22 (GPTASGKS) participates in ATP binding. 17–22 (TASGKS) provides a ligand contact to substrate. Interaction with substrate tRNA regions lie at residues 40 to 43 (DSMQ) and 164 to 168 (QRIVR).

It belongs to the IPP transferase family. As to quaternary structure, monomer. It depends on Mg(2+) as a cofactor.

The enzyme catalyses adenosine(37) in tRNA + dimethylallyl diphosphate = N(6)-dimethylallyladenosine(37) in tRNA + diphosphate. Functionally, catalyzes the transfer of a dimethylallyl group onto the adenine at position 37 in tRNAs that read codons beginning with uridine, leading to the formation of N6-(dimethylallyl)adenosine (i(6)A). The chain is tRNA dimethylallyltransferase from Rhizobium etli (strain ATCC 51251 / DSM 11541 / JCM 21823 / NBRC 15573 / CFN 42).